The chain runs to 230 residues: Sugar fermentation stimulation protein homolog (230 aa).

Belongs to the SfsA family.

The sequence is that of Sugar fermentation stimulation protein homolog from Clostridium tetani (strain Massachusetts / E88).